Here is a 1479-residue protein sequence, read N- to C-terminus: Protein CHROMATIN REMODELING 20 (1479 aa).

Residues 19–49 (EVIVESKEDEMDIIIEENREAEQEVMEVKAR) are a coiled coil. Residues 40-55 (EQEVMEVKARDGRGEQ) show a composition bias toward basic and acidic residues. The segment at 40-109 (EQEVMEVKAR…DELDLEKPLS (70 aa)) is disordered. Low complexity predominate over residues 76–86 (DASSRSESSDF). Residues 94–109 (ILSRRDDELDLEKPLS) show a composition bias toward basic and acidic residues. A coiled-coil region spans residues 109–199 (SEEEIDELIS…EQLDGAGIEL (91 aa)). The region spanning 472 to 601 (RDDSQNPANN…KKSIELSSDS (130 aa)) is the ADD domain. The segment at 483–514 (RCTACNKVAVEVHSHPLLEVIVCMDCKRSIED) adopts a GATA-type; atypical zinc-finger fold. A PHD-type; atypical zinc finger spans residues 524–577 (ERHCEWCGHIADLIDCRTCEKLFCASCIKRNIGEEYMSEAQSSGWDCCCCSPIP). The stretch at 578 to 598 (LQRLTLELEKAMRDKKSIELS) forms a coiled coil. Positions 594–615 (SIELSSDSSSDSSSDNNSVDTD) are disordered. Residues 598-615 (SSDSSSDSSSDNNSVDTD) show a composition bias toward low complexity. One can recognise a Helicase ATP-binding domain in the interval 741–924 (VKSGDKGLGC…YCMVDFVREG (184 aa)). 754 to 761 (HTMGLGKT) contributes to the ATP binding site. Residues 875 to 878 (DEAH) carry the DEAH box motif. The 169-residue stretch at 1122 to 1290 (DILSMSADVG…QVHRTISKEE (169 aa)) folds into the Helicase C-terminal domain. The segment at 1400–1423 (SESPVVPKPSPSTQTEPLPQPKGF) is disordered.

The protein belongs to the SNF2/RAD54 helicase family.

It is found in the nucleus. Its subcellular location is the chromosome. It localises to the telomere. Involved in transcriptional regulation and chromatin remodeling. Facilitates DNA replication in multiple cellular environments and is required for efficient replication of a subset of genomic loci. Binds to DNA tandem repeat sequences in both telomeres and euchromatin and in vitro binds DNA quadruplex structures. May help stabilizing G-rich regions into regular chromatin structures by remodeling G4 DNA and incorporating H3.3-containing nucleosomes. Involved in DNA repair of gamma-irradiation-mediated damages. This chain is Protein CHROMATIN REMODELING 20, found in Arabidopsis thaliana (Mouse-ear cress).